The sequence spans 71 residues: Protein CYSTEINE-RICH TRANSMEMBRANE MODULE 4 (71 aa).

A compositionally biased stretch (polar residues) spans 1 to 12 (MSQYSQNQSSGA). Residues 1 to 31 (MSQYSQNQSSGAYPTPPVSTGPYMTPPPLGY) are disordered. The span at 14 to 30 (PTPPVSTGPYMTPPPLG) shows a compositional bias: pro residues. The chain crosses the membrane as a helical span at residues 48–64 (SKGDGFLKGCLAAMCCC).

Belongs to the CYSTM1 family. As to quaternary structure, heterodimers. Interacts with CYSTM6, CYSTM7, CYSTM12 and WIH1/CYSTM13. In terms of tissue distribution, mostly expressed in roots, stems, rosette leaves and siliques and, to a lower extent, in flowers and cauline leaves.

Its subcellular location is the cell membrane. It is found in the cytoplasm. Functionally, involved in resistance to abiotic stress. The protein is Protein CYSTEINE-RICH TRANSMEMBRANE MODULE 4 of Arabidopsis thaliana (Mouse-ear cress).